The following is a 227-amino-acid chain: RNA pyrophosphohydrolase (227 aa).

In terms of domain architecture, Nudix hydrolase spans 6–149 (GFRPNVGIIL…KRDVYQMALT (144 aa)). The short motif at 38-59 (GGIKYGETPEQAMYRELHEEIG) is the Nudix box element. A disordered region spans residues 165–227 (PYGTHGAHGA…PVSTTRSTDD (63 aa)). Over residues 192-201 (AQAAQQADAD) the composition is skewed to low complexity. The span at 217–227 (TPVSTTRSTDD) shows a compositional bias: polar residues.

The protein belongs to the Nudix hydrolase family. RppH subfamily. A divalent metal cation serves as cofactor.

Functionally, accelerates the degradation of transcripts by removing pyrophosphate from the 5'-end of triphosphorylated RNA, leading to a more labile monophosphorylated state that can stimulate subsequent ribonuclease cleavage. The polypeptide is RNA pyrophosphohydrolase (Cupriavidus taiwanensis (strain DSM 17343 / BCRC 17206 / CCUG 44338 / CIP 107171 / LMG 19424 / R1) (Ralstonia taiwanensis (strain LMG 19424))).